Reading from the N-terminus, the 268-residue chain is Small ribosomal subunit protein eS1 (268 aa).

Disordered regions lie at residues 1 to 21 (MAVG…KKKV) and 238 to 268 (GGGK…QEAV).

Belongs to the eukaryotic ribosomal protein eS1 family. In terms of assembly, component of the small ribosomal subunit. Mature ribosomes consist of a small (40S) and a large (60S) subunit. The 40S subunit contains about 33 different proteins and 1 molecule of RNA (18S). The 60S subunit contains about 49 different proteins and 3 molecules of RNA (28S, 5.8S and 5S).

Its subcellular location is the cytoplasm. Functionally, essential for oogenesis; required for late follicle cell development. This Drosophila ananassae (Fruit fly) protein is Small ribosomal subunit protein eS1.